Consider the following 109-residue polypeptide: Spermidine export protein MdtI (109 aa).

Transmembrane regions (helical) follow at residues 6–26 (WIHA…NVFL), 36–56 (VYGI…SQAV), 64–84 (AYAL…WVLF), and 88–108 (LNNK…LIKL).

The protein belongs to the drug/metabolite transporter (DMT) superfamily. Small multidrug resistance (SMR) (TC 2.A.7.1) family. MdtI subfamily. Forms a complex with MdtJ.

The protein localises to the cell inner membrane. In terms of biological role, catalyzes the excretion of spermidine. This chain is Spermidine export protein MdtI, found in Klebsiella pneumoniae (strain 342).